Consider the following 183-residue polypeptide: MRLLAVVVLALLAVSQAEEGARLLASKSLLNRYAVEGRDLTLQYNIYNVGSSAALDVELSDDSFPPEDFGIVSGMLNVKWDRIAPASNVSHTVVLRPLKAGYFNFTSATITYLAQEDGPVVIGSTSAPGQGGILAQREFDRRFSPHFLDWAAFGVMTLPSIGIPLLLWYSSKRKYDTPKPKKN.

An N-terminal signal peptide occupies residues 1–17 (MRLLAVVVLALLAVSQA). Over 18-146 (EEGARLLASK…REFDRRFSPH (129 aa)) the chain is Lumenal. N-linked (GlcNAc...) (high mannose) asparagine glycosylation is present at Asn-88. A glycan (N-linked (GlcNAc...) asparagine) is linked at Asn-104. A helical membrane pass occupies residues 147–167 (FLDWAAFGVMTLPSIGIPLLL). Residues 168-183 (WYSSKRKYDTPKPKKN) are Cytoplasmic-facing.

This sequence belongs to the TRAP-beta family. In terms of assembly, heterotetramer of TRAP-alpha, TRAP-beta, TRAP-delta and TRAP-gamma. Interacts with STING1.

Its subcellular location is the endoplasmic reticulum membrane. In terms of biological role, TRAP proteins are part of a complex whose function is to bind calcium to the ER membrane and thereby regulate the retention of ER resident proteins. The sequence is that of Translocon-associated protein subunit beta (Ssr2) from Mus musculus (Mouse).